A 715-amino-acid chain; its full sequence is MKELFATTARGFEELLKLELSSLGATECQVAQGGVHFMADDETQYRALLWSRLSSRILLPIVKTKIYSDLDLYSAVVRQNWLAYFDERVRFLVDFNGTNREIRHTQFGAMRVKDGIVDYFERNGKARPNVDKDYPDIRIHAYLNRDDLVLSLDLSGEALHLRGYREDSGAAPLRETLAAAIVLRSGWKQGTPLVDPMCGSGTLLIEAAQMEAKIAPQLHRMHWGFDFWRGHNQAAWEKVKREAVAMAEAEFNKNPNPHFYGFDLDHRVLQKAQRNAQNAGVAHLIKWKQGDVAALKNPTPEDKGTVICNPPYGERLGTTPALIALYSVFGQRLKEQFPGWNASIFSSEQGLLDCLRMRSHRQFKAKNGPLDCIQKNYQISDRTLSPENKSAVENAGEFKPNANVATDFANRLQKNIKKIEKWAKQEGIEAYRLYDADLPDYNLAVDHYGDHIVVQEYAAPKNIDENKARQRLLDAVTATLAVTGVETNKLILKVRQKQKGANQYEKLANKGEYFYVNEYGAKLWVNLTDYLDTGLFLDHRLTRRMVGQMAKGKDFLNLFAYTGSATVHAALGGAKSTTTVDMSNTYLNWAEQNLILNEADGKQHKLIQADCLQWLANCAQQFDLIFVDPPTFSNSKRMEDSWDVQRDHIKLMGNLKRILRPNGTIVFSNNKRGFKMDFEGLTRLGLKAEEISAKTLPLDFERNKQIHNCWIVEFV.

A THUMP domain is found at 43 to 154 (TQYRALLWSR…RDDLVLSLDL (112 aa)).

The protein belongs to the methyltransferase superfamily. RlmKL family.

It is found in the cytoplasm. It catalyses the reaction guanosine(2445) in 23S rRNA + S-adenosyl-L-methionine = N(2)-methylguanosine(2445) in 23S rRNA + S-adenosyl-L-homocysteine + H(+). It carries out the reaction guanosine(2069) in 23S rRNA + S-adenosyl-L-methionine = N(2)-methylguanosine(2069) in 23S rRNA + S-adenosyl-L-homocysteine + H(+). In terms of biological role, specifically methylates the guanine in position 2445 (m2G2445) and the guanine in position 2069 (m7G2069) of 23S rRNA. This Mannheimia succiniciproducens (strain KCTC 0769BP / MBEL55E) protein is Ribosomal RNA large subunit methyltransferase K/L.